The sequence spans 249 residues: Probable transcriptional regulatory protein Csal_1845 (249 aa).

Belongs to the TACO1 family.

The protein resides in the cytoplasm. In Chromohalobacter salexigens (strain ATCC BAA-138 / DSM 3043 / CIP 106854 / NCIMB 13768 / 1H11), this protein is Probable transcriptional regulatory protein Csal_1845.